Reading from the N-terminus, the 163-residue chain is UPF0262 protein RPD_4278 (163 aa).

It belongs to the UPF0262 family.

The polypeptide is UPF0262 protein RPD_4278 (Rhodopseudomonas palustris (strain BisB5)).